The sequence spans 1051 residues: Protein transport protein Sec16B (1051 aa).

Residues 1–23 (MEPWVPQTQGRTTGPSRDTNRGL) show a composition bias toward polar residues. Residues 1 to 109 (MEPWVPQTQG…PYQRYHTPTP (109 aa)) are disordered. The segment covering 39 to 63 (DKYHQWQDAHKNSKSQQDLRDDHQQ) has biased composition (basic and acidic residues). Positions 64-77 (SHSVSRSGEWSQPV) are enriched in polar residues. A phosphoserine mark is found at Ser-70 and Ser-137. Positions 157-203 (EKHNGTFGANSDTQFQFTSKNPYRDSPASVSGQEQPGEFFPESEAQK) are disordered. A compositionally biased stretch (polar residues) spans 163–177 (FGANSDTQFQFTSKN). Ser-182, Ser-185, and Ser-245 each carry phosphoserine. The tract at residues 263 to 708 (APMRFYVPHV…KHKDLEQNRT (446 aa)) is central conserved domain (CCD); required for localization to endoplasmic reticulum exit sites. Residues 703 to 715 (LEQNRTGAPRDPD) show a composition bias toward basic and acidic residues. Disordered regions lie at residues 703-754 (LEQN…LWST), 798-820 (SGASGSSVAVTGTPGGRVGEDML), and 850-1051 (TPAA…TQPC). Polar residues predominate over residues 737-754 (GHQNYSEDSEYSSTLWST). The span at 798-809 (SGASGSSVAVTG) shows a compositional bias: low complexity. Thr-850 carries the phosphothreonine modification. 5 positions are modified to phosphoserine: Ser-860, Ser-863, Ser-866, Ser-874, and Ser-875. A compositionally biased stretch (basic and acidic residues) spans 877 to 897 (GADKPSHPDASQKGKLGDGKN). Residues 900 to 920 (SSGFGWFSWFRSKPASSVSTS) show a composition bias toward low complexity. Positions 921–932 (GDEDSSDSSDSE) are enriched in acidic residues. Low complexity predominate over residues 936-947 (RASSPHHASPGL). Residues 984 to 993 (EGMGIGGFSG) show a composition bias toward gly residues. Positions 1022–1037 (NPSQVPQLPTASSLNR) are enriched in polar residues.

This sequence belongs to the SEC16 family. In terms of assembly, SEC16A and SEC16B are each present in multiple copies in a heteromeric complex. Interacts with TFG. Interacts with SEC13. In terms of tissue distribution, liver.

The protein localises to the endoplasmic reticulum membrane. Its subcellular location is the golgi apparatus membrane. Plays a role in the organization of the endoplasmic reticulum exit sites (ERES), also known as transitional endoplasmic reticulum (tER). Required for secretory cargo traffic from the endoplasmic reticulum to the Golgi apparatus. Involved in peroxisome biogenesis. Regulates the transport of peroxisomal biogenesis factors PEX3 and PEX16 from the ER to peroxisomes. This Mus musculus (Mouse) protein is Protein transport protein Sec16B (Sec16b).